We begin with the raw amino-acid sequence, 509 residues long: 2,3-bisphosphoglycerate-independent phosphoglycerate mutase (509 aa).

2 residues coordinate Mn(2+): Asp-12 and Ser-62. Catalysis depends on Ser-62, which acts as the Phosphoserine intermediate. Residues His-123, 153–154 (RD), Arg-185, Arg-191, 260–263 (RPDR), and Lys-333 each bind substrate. Residues Asp-400, His-404, Asp-441, His-442, and His-460 each coordinate Mn(2+).

The protein belongs to the BPG-independent phosphoglycerate mutase family. Monomer. It depends on Mn(2+) as a cofactor.

It catalyses the reaction (2R)-2-phosphoglycerate = (2R)-3-phosphoglycerate. It functions in the pathway carbohydrate degradation; glycolysis; pyruvate from D-glyceraldehyde 3-phosphate: step 3/5. Its function is as follows. Catalyzes the interconversion of 2-phosphoglycerate and 3-phosphoglycerate. The polypeptide is 2,3-bisphosphoglycerate-independent phosphoglycerate mutase (Clostridium botulinum (strain Langeland / NCTC 10281 / Type F)).